A 441-amino-acid polypeptide reads, in one-letter code: MGAVLSIPLALASSLSGVVGIASSFLVTSVLSLTNSIQSNVGAVISYAVLYFVNSLLSWCMLSSWFNSKLSKLSAGYLQFDCQNDGKCYSVIAVHRLSFTLVMFHLFLAFILSLCNTRSRVAIKIQNGLWPFKIVLWFVLGIFSFFIPTKFLSFWGNIISVMGSALFIVYGLMLLVDFAHTWAERCVDRVLTSDSSSSKFYLIGSTVGMYVVGLVLTILTYVFFCASSCSFNQAINTINLLLCIAVSCLSVHPTIQEYNPRSGLAQSSMVMCYTCYLILSALANRPDEGQCNPWGNSASGTREFSKVIGAAFTFFTILYSAVRAASSRESDDSYSYLYADSHDMGVSTPLEDGSSEEDKHQSDYNFIWFHIVFVLAAFYTASLLTNWNTTSVYENQKNDVFVRIGFSYAAVWVKIITSWVCHGLYVWSCLAPVFFPYRFMI.

The next 11 membrane-spanning stretches (helical) occupy residues 1 to 21 (MGAV…VVGI), 41 to 61 (VGAV…SWCM), 97 to 117 (LSFT…LCNT), 128 to 148 (GLWP…FFIP), 158 to 178 (IISV…LVDF), 206 to 226 (TVGM…FFCA), 235 to 255 (INTI…HPTI), 263 to 283 (GLAQ…SALA), 307 to 327 (VIGA…AASS), 364 to 384 (YNFI…ASLL), and 415 to 435 (IITS…PVFF).

It belongs to the TDE1 family.

It localises to the membrane. In Schizosaccharomyces pombe (strain 972 / ATCC 24843) (Fission yeast), this protein is Membrane protein PB1A10.07c.